Here is a 329-residue protein sequence, read N- to C-terminus: Diaminopimelate epimerase (329 aa).

Residues Asn-14 and Asn-73 each contribute to the substrate site. Cys-82 acts as the Proton donor in catalysis. Substrate is bound by residues 83-84 (GN), Asn-170, Asn-206, and 224-225 (ER). The active-site Proton acceptor is the Cys-233. 234-235 (GT) contributes to the substrate binding site.

Belongs to the diaminopimelate epimerase family. In terms of assembly, homodimer.

Its subcellular location is the cytoplasm. It catalyses the reaction (2S,6S)-2,6-diaminopimelate = meso-2,6-diaminopimelate. The protein operates within amino-acid biosynthesis; L-lysine biosynthesis via DAP pathway; DL-2,6-diaminopimelate from LL-2,6-diaminopimelate: step 1/1. Catalyzes the stereoinversion of LL-2,6-diaminopimelate (L,L-DAP) to meso-diaminopimelate (meso-DAP), a precursor of L-lysine and an essential component of the bacterial peptidoglycan. This chain is Diaminopimelate epimerase, found in Listeria monocytogenes serovar 1/2a (strain ATCC BAA-679 / EGD-e).